Consider the following 375-residue polypeptide: Circadian-associated transcriptional repressor (375 aa).

The span at 1–32 shows a compositional bias: low complexity; that stretch reads MDSPSSVSSYSSSSLSPSFSTSSVNSDFSFPS. 3 disordered regions span residues 1 to 102, 192 to 218, and 351 to 375; these read MDSP…LNTQ, KSSS…AASP, and DREM…DPQP. Basic and acidic residues predominate over residues 33–46; the sequence is DNEREGKGTHELRP.

Interacts with BMAL1, PER2, CRY2, BHLHE41, HDAC1 NR3C1.

Its subcellular location is the nucleus. It is found in the PML body. Its function is as follows. Transcriptional repressor which forms a negative regulatory component of the circadian clock and acts independently of the circadian transcriptional repressors: CRY1, CRY2 and BHLHE41. In a histone deacetylase-dependent manner represses the transcriptional activator activity of the CLOCK-BMAL1 heterodimer. Abrogates the interaction of BMAL1 with the transcriptional coactivator CREBBP and can repress the histone acetyl-transferase activity of the CLOCK-BMAL1 heterodimer, reducing histone acetylation of its target genes. Rhythmically binds the E-box elements (5'-CACGTG-3') on circadian gene promoters and its occupancy shows circadian oscillation antiphasic to BMAL1. Interacts with the glucocorticoid receptor (NR3C1) and contributes to the repressive function in the glucocorticoid response. The protein is Circadian-associated transcriptional repressor (Ciart) of Mus musculus (Mouse).